The chain runs to 172 residues: Small ribosomal subunit protein uS5 (172 aa).

One can recognise an S5 DRBM domain in the interval 17–80 (LREKMISVNR…DEARRKMVKV (64 aa)).

This sequence belongs to the universal ribosomal protein uS5 family. As to quaternary structure, part of the 30S ribosomal subunit. Contacts proteins S4 and S8.

Functionally, with S4 and S12 plays an important role in translational accuracy. Located at the back of the 30S subunit body where it stabilizes the conformation of the head with respect to the body. The chain is Small ribosomal subunit protein uS5 from Cupriavidus taiwanensis (strain DSM 17343 / BCRC 17206 / CCUG 44338 / CIP 107171 / LMG 19424 / R1) (Ralstonia taiwanensis (strain LMG 19424)).